The chain runs to 203 residues: NADH-quinone oxidoreductase subunit C (203 aa).

This sequence belongs to the complex I 30 kDa subunit family. NDH-1 is composed of 14 different subunits. Subunits NuoB, C, D, E, F, and G constitute the peripheral sector of the complex.

It localises to the cell inner membrane. It catalyses the reaction a quinone + NADH + 5 H(+)(in) = a quinol + NAD(+) + 4 H(+)(out). NDH-1 shuttles electrons from NADH, via FMN and iron-sulfur (Fe-S) centers, to quinones in the respiratory chain. The immediate electron acceptor for the enzyme in this species is believed to be ubiquinone. Couples the redox reaction to proton translocation (for every two electrons transferred, four hydrogen ions are translocated across the cytoplasmic membrane), and thus conserves the redox energy in a proton gradient. This is NADH-quinone oxidoreductase subunit C from Polaromonas sp. (strain JS666 / ATCC BAA-500).